Here is a 306-residue protein sequence, read N- to C-terminus: Protein YIPF1 (306 aa).

Residues 1–119 (MAAVDDLQFE…VRLYIRSNPD (119 aa)) lie on the Cytoplasmic side of the membrane. Residues 14-62 (NAATSLTANPDATTVNIEDPGETPKHQSGSPRGSGREEDDELLGNDDSD) are disordered. Residues 15 to 29 (AATSLTANPDATTVN) are compositionally biased toward polar residues. A compositionally biased stretch (acidic residues) spans 50-59 (EEDDELLGND). The helical transmembrane segment at 120 to 140 (LYGPFWICATLVFAIAISGNL) threads the bilayer. Over 141-162 (SNFLIHLGEKTYRYVPEFRKVS) the chain is Lumenal. Residues 163-183 (IAATTIYAYAWLVPLALWGFL) traverse the membrane as a helical segment. At 184–200 (MWRNSKVMNIVSYSFLE) the chain is on the cytoplasmic side. A helical transmembrane segment spans residues 201–221 (IVCVYGYSLFIYIPTAILWII). Residues 222–227 (PQKAVR) are Lumenal-facing. Residues 228–248 (WILVMIALGISGSVLAMTFWP) form a helical membrane-spanning segment. Residues 249 to 256 (AVREDNRR) are Cytoplasmic-facing. Residues 257-277 (VALATIVTIVLLHMLLSVGCL) form a helical membrane-spanning segment. The Lumenal portion of the chain corresponds to 278–306 (AYFFDAPEMDHLPTTTATPNQTVAAAKSS). Asparagine 297 carries an N-linked (GlcNAc...) asparagine glycan.

The protein belongs to the YIP1 family. In terms of assembly, interacts with YIPF6; this interaction may stabilize YIPF1. May also form a ternary complex with YIPF2 and YIPF6.

It localises to the golgi apparatus. It is found in the cis-Golgi network membrane. The protein localises to the trans-Golgi network membrane. The protein resides in the late endosome membrane. The sequence is that of Protein YIPF1 (YIPF1) from Pongo abelii (Sumatran orangutan).